Consider the following 1450-residue polypeptide: DNA-directed RNA polymerase RPB1 homolog (1450 aa).

It belongs to the RNA polymerase beta' chain family. In terms of assembly, part of the viral DNA-directed RNA polymerase that consists of 8 polII-like subunits (RPB1, RPB2, RPB3, RPB5, RPB6, RPB7, RPB9, RPB10), a capping enzyme and a termination factor.

The protein resides in the virion. The catalysed reaction is RNA(n) + a ribonucleoside 5'-triphosphate = RNA(n+1) + diphosphate. Its function is as follows. Catalytic component of the DNA-directed RNA polymerase (RNAP) that catalyzes the transcription in the cytoplasm of viral DNA into RNA using the four ribonucleoside triphosphates as substrates. Forms the polymerase active center together with RPB2. Part of the core element with the central large cleft, the clamp element that moves to open and close the cleft and the jaws that are thought to grab the incoming DNA template. In African swine fever virus (strain Badajoz 1971 Vero-adapted) (Ba71V), this protein is DNA-directed RNA polymerase RPB1 homolog.